The sequence spans 806 residues: MTPSTSHISSQLRQLIYYHLDNNLARNALFLAGRLHAYEPRTSEASYLLALCYLQNGQVKAAWETSKHFGSRGAHLGCSYVYAQACLDLGKYTDGINALERSKGQWTSRNHWNKHSETRRQHLPDAAAVLCLQGKLWQAHKEHNKAVECYAAALKLNPFMWDAFLNLCETGVDLRVSNIYKMSPELYSMVSSAALEDVESQVLPPDGPLQTQVNPNPSLDPFTAGTTRSDSTSTHGSSALWEKLNGSTVSVASSGTGPHLPREGMETPGGQSSESDDPRVTNGNGTDVFEPPLAPAKKNRTIQTIGGDHPMDPPPKMRPTGIRPRTRTKFESDEGHTERDAGMGHRLGDRKRTVSGQVAHPSVPHSTDQGVGQRRSVRLFNQIKPSTNKISSTALGVKEGREVKKVRTTGNKARTTTSSNVGRVVSGNNRRHAGEIHDGDSKEYRGTSSTSNGSQNASSKLAISERTKSVEALAWILDLFFKIASGYFCLSRYKCSDAIQIFSSLSQGQRETPWVLAQIGRAYYEQAMYTEAEKYFVRVKAMAPSRLEDMEIYSTVLWHLKNDVELAYLAHELMDVDRLSPEAWCAVGNSFSHQRDHDQALKCFKRATQLDPHFAYGFTLQGHEYVANEEYDKALDAYRSGINADSRHYNAWYGLGTVYDKMGKLDFAEQHFRNAAKINPSNAVLICCIGLVLEKMNNPKSALIQYNRACTLAPHSVLARFRKARALMKLQDLKSALTELKVLKDMAPDEANVHYLLGKLYKMLRDKGNAIKHFTTALNLDPKAAQYIKDAMEALDDDEEDEEDMA.

TPR repeat units follow at residues 76-109 (LGCS…WTSR) and 127-160 (AAVL…NPFM). Disordered stretches follow at residues 202–348 (VLPP…HRLG), 353–372 (TVSG…QGVG), and 401–460 (REVK…ASSK). Residues 224 to 237 (AGTTRSDSTSTHGS) show a composition bias toward polar residues. Residues 246–257 (GSTVSVASSGTG) are compositionally biased toward low complexity. The segment at 260 to 399 (LPREGMETPG…ISSTALGVKE (140 aa)) is bimA domain. A compositionally biased stretch (basic and acidic residues) spans 328-348 (TKFESDEGHTERDAGMGHRLG). Positions 408-421 (TTGNKARTTTSSNV) are enriched in polar residues. A compositionally biased stretch (basic and acidic residues) spans 432–445 (HAGEIHDGDSKEYR). The span at 446 to 459 (GTSSTSNGSQNASS) shows a compositional bias: low complexity. TPR repeat units lie at residues 513-546 (PWVL…APSR), 581-614 (PEAW…DPHF), 616-648 (YGFT…DSRH), 649-682 (YNAW…NPSN), 684-716 (VLIC…APHS), and 751-784 (ANVH…DPKA).

It belongs to the APC3/CDC27 family.

It is found in the nucleus. Functionally, required for the completion of mitosis in Aspergillus nidulans. This chain is Protein bimA (bimA), found in Emericella nidulans (strain FGSC A4 / ATCC 38163 / CBS 112.46 / NRRL 194 / M139) (Aspergillus nidulans).